The sequence spans 383 residues: tRNA(Met) cytidine acetate ligase (383 aa).

Residues Ile-7–Leu-20, Gly-101, Asn-153, and Arg-178–Ile-179 contribute to the ATP site.

It belongs to the TmcAL family.

It localises to the cytoplasm. The enzyme catalyses cytidine(34) in elongator tRNA(Met) + acetate + ATP = N(4)-acetylcytidine(34) in elongator tRNA(Met) + AMP + diphosphate. Catalyzes the formation of N(4)-acetylcytidine (ac(4)C) at the wobble position of elongator tRNA(Met), using acetate and ATP as substrates. First activates an acetate ion to form acetyladenylate (Ac-AMP) and then transfers the acetyl group to tRNA to form ac(4)C34. This chain is tRNA(Met) cytidine acetate ligase, found in Lactobacillus acidophilus (strain ATCC 700396 / NCK56 / N2 / NCFM).